Here is a 276-residue protein sequence, read N- to C-terminus: Protein MGF 360-15R (276 aa).

Belongs to the asfivirus MGF 360 family.

Plays a role in virus cell tropism, and may be required for efficient virus replication in macrophages. The sequence is that of Protein MGF 360-15R from Ornithodoros (relapsing fever ticks).